Consider the following 220-residue polypeptide: Small ribosomal subunit protein uS3 (220 aa).

Residues 38–106 enclose the KH type-2 domain; that stretch reads IREFVKKSLN…EVFLNIVEVR (69 aa).

It belongs to the universal ribosomal protein uS3 family. In terms of assembly, part of the 30S ribosomal subunit. Forms a tight complex with proteins S10 and S14.

Its function is as follows. Binds the lower part of the 30S subunit head. Binds mRNA in the 70S ribosome, positioning it for translation. The polypeptide is Small ribosomal subunit protein uS3 (Myxococcus xanthus (strain DK1622)).